A 319-amino-acid polypeptide reads, in one-letter code: MTKTKIIFMGTPQFAATVLKGLIDSNQYEILAVVTQPDRKVGRKQELRMTPVKELALTVNLPVLQPEKLSGSVEMTQIMTLLESGEVGIVTAAFGQFLPGKLLDVAQFAVNTHASLLPKYRGGAPIHYAIMNGEKEAGVTIMEMIRKMDAGDMIAQDSTPILEDDNVGTMFEKLALVGRDLLLETLPKYLSGQLKAQAQNEDEVTFSPNISPEEEKIDWNKSAREIFNKVRGMNPFPVAHTTWNGERFKIYETKVVDDSVGNLQAGEIVEKTKKSLKVATGEGLLELLFVQPAGKPKMDIVSFLNGLGQKIQVGDKFGD.

115 to 118 (SLLP) contributes to the (6S)-5,6,7,8-tetrahydrofolate binding site.

Belongs to the Fmt family.

The enzyme catalyses L-methionyl-tRNA(fMet) + (6R)-10-formyltetrahydrofolate = N-formyl-L-methionyl-tRNA(fMet) + (6S)-5,6,7,8-tetrahydrofolate + H(+). Attaches a formyl group to the free amino group of methionyl-tRNA(fMet). The formyl group appears to play a dual role in the initiator identity of N-formylmethionyl-tRNA by promoting its recognition by IF2 and preventing the misappropriation of this tRNA by the elongation apparatus. The protein is Methionyl-tRNA formyltransferase of Lactococcus lactis subsp. lactis (strain IL1403) (Streptococcus lactis).